A 380-amino-acid chain; its full sequence is Probable inorganic pyrophosphatase (380 aa).

Residues Asp198, Asp203, and Asp235 each coordinate Mg(2+).

Belongs to the PPase family. The cofactor is Mg(2+).

It carries out the reaction diphosphate + H2O = 2 phosphate + H(+). The polypeptide is Probable inorganic pyrophosphatase (Plasmodium falciparum (isolate 3D7)).